Here is a 483-residue protein sequence, read N- to C-terminus: Glutamyl-tRNA(Gln) amidotransferase subunit A (483 aa).

Active-site charge relay system residues include Lys75 and Ser150. Ser174 acts as the Acyl-ester intermediate in catalysis.

Belongs to the amidase family. GatA subfamily. As to quaternary structure, heterotrimer of A, B and C subunits.

The catalysed reaction is L-glutamyl-tRNA(Gln) + L-glutamine + ATP + H2O = L-glutaminyl-tRNA(Gln) + L-glutamate + ADP + phosphate + H(+). In terms of biological role, allows the formation of correctly charged Gln-tRNA(Gln) through the transamidation of misacylated Glu-tRNA(Gln) in organisms which lack glutaminyl-tRNA synthetase. The reaction takes place in the presence of glutamine and ATP through an activated gamma-phospho-Glu-tRNA(Gln). The protein is Glutamyl-tRNA(Gln) amidotransferase subunit A of Legionella pneumophila (strain Paris).